The primary structure comprises 634 residues: GTP-binding protein 4 (634 aa).

Position 2 is an N-acetylalanine (Ala2). Position 103 is an N6-acetyllysine; alternate (Lys103). Lys103 participates in a covalent cross-link: Glycyl lysine isopeptide (Lys-Gly) (interchain with G-Cter in SUMO2); alternate. Ser122 is modified (phosphoserine). Residues 169 to 340 (RTLLLCGYPN…VKTEACDRLL (172 aa)) enclose the OBG-type G domain. GTP is bound by residues 175 to 182 (GYPNVGKS), 221 to 225 (DTPGI), and 289 to 292 (NKCD). A Glycyl lysine isopeptide (Lys-Gly) (interchain with G-Cter in SUMO2) cross-link involves residue Lys332. 3 positions are modified to phosphoserine: Ser468, Ser470, and Ser472. Positions 495-517 (ILESKEKNTQGPRMPRTAKKVQR) are disordered. The residue at position 522 (Lys522) is an N6-acetyllysine. The disordered stretch occupies residues 529–634 (VDMDDKDDAH…KRKAGKKDRR (106 aa)). Lys534 is covalently cross-linked (Glycyl lysine isopeptide (Lys-Gly) (interchain with G-Cter in SUMO2)). The segment covering 544-554 (RRSRSITRKRK) has biased composition (basic residues). Phosphoserine is present on Ser558. Residues 560–572 (PPSSVARSGSCSR) show a composition bias toward polar residues. Residues 573-585 (TPRDVSGLRDVKM) show a composition bias toward basic and acidic residues. Residues 586–604 (VKKAKTMMKNAQKKMNRLG) show a composition bias toward basic residues. Residues 605-618 (KKGEADRHVFDMKP) are compositionally biased toward basic and acidic residues. Residues 619–634 (KHLLSGKRKAGKKDRR) are compositionally biased toward basic residues.

The protein belongs to the TRAFAC class OBG-HflX-like GTPase superfamily. OBG GTPase family. NOG subfamily. Associates with pre-60S ribosomal particles. Interacts with MINAS-60 (product of an alternative open reading frame of RBM10).

It localises to the nucleus. It is found in the nucleolus. Involved in the biogenesis of the 60S ribosomal subunit. Acts as a TP53 repressor, preventing TP53 stabilization and cell cycle arrest. The polypeptide is GTP-binding protein 4 (Homo sapiens (Human)).